The sequence spans 251 residues: Cytochrome P450 monooxygenase ppzG (251 aa).

C250 provides a ligand contact to heme.

It belongs to the cytochrome P450 family. Requires heme as cofactor.

Its pathway is secondary metabolite biosynthesis. In terms of biological role, cytochrome P450 monooxygenase; part of the gene cluster that mediates the biosynthesis of pyrrolopyrazines, secondary metabolites showing insecticidal activity. The role of ppzG within the pathway has still to be determined. The single multifunctional NRPS ppzA is sufficient to produce peramine via condensation of 1-pyrroline-5-carboxylate and arginine, N-methylation of the alpha-amino group of arginine and reduction of the thioester and the cyclization to form an iminium ion resulting in release from the peptide synthetase. Deprotonation of this intermediate and oxidation of the pyrroline ring would give rise to peramine. In Epichloe species that produce only peramine, the peramine synthetase gene is not localized in a gene cluster, in contrast to Metarhizium species that contain additional pyrrolopyrazine biosynthesis genes. The 2-oxoglutarate-Fe(II) type oxidoreductase ppzC hydroxylates peramine to yield the newly identified compound 8-hydroxyperamine whereas ppzD converts L-proline into trans-4-hydroxy-L-proline, a precursor of peramine biosynthesis. The polypeptide is Cytochrome P450 monooxygenase ppzG (Metarhizium rileyi (strain RCEF 4871) (Nomuraea rileyi)).